Reading from the N-terminus, the 77-residue chain is Conodipine-M alpha chain (77 aa).

Gln-1 carries the pyrrolidone carboxylic acid modification. The active site involves His-36.

As to quaternary structure, heterodimer of an alpha and a beta chains; probably disulfide-linked. Ca(2+) serves as cofactor. In terms of tissue distribution, expressed by the venom duct.

The protein resides in the secreted. It carries out the reaction a 1,2-diacyl-sn-glycero-3-phosphocholine + H2O = a 1-acyl-sn-glycero-3-phosphocholine + a fatty acid + H(+). Its activity is regulated as follows. Inhibited by linoleoyl amide and MG14. Functionally, heterodimer: conodipine-M catalyzes the calcium-dependent hydrolysis of the 2-acyl groups in 3-sn-phosphoglycerides. This activity may be supported by the alpha chain. Conodipine-M inhibits the binding of isradipine (a ligand specific for L-type calcium channel) to L-type calcium channels. The protein is Conodipine-M alpha chain of Conus magus (Magical cone).